The sequence spans 229 residues: UPF0758 protein Cbei_0490 (229 aa).

Residues 107–229 enclose the MPN domain; it reads KITSPKDLAS…FVSLKERGLI (123 aa). Residues H178, H180, and D191 each contribute to the Zn(2+) site. The JAMM motif motif lies at 178-191; it reads HNHPSGDPTPSRED.

It belongs to the UPF0758 family.

The polypeptide is UPF0758 protein Cbei_0490 (Clostridium beijerinckii (strain ATCC 51743 / NCIMB 8052) (Clostridium acetobutylicum)).